Reading from the N-terminus, the 53-residue chain is UPF0391 membrane protein BP1737 (53 aa).

2 helical membrane-spanning segments follow: residues 5–25 (AVVF…GIAA) and 30–50 (IAKI…LGGV).

The protein belongs to the UPF0391 family.

The protein resides in the cell membrane. The protein is UPF0391 membrane protein BP1737 of Bordetella pertussis (strain Tohama I / ATCC BAA-589 / NCTC 13251).